A 165-amino-acid chain; its full sequence is 2-C-methyl-D-erythritol 2,4-cyclodiphosphate synthase (165 aa).

A divalent metal cation is bound by residues Asp13 and His15. 4-CDP-2-C-methyl-D-erythritol 2-phosphate-binding positions include 13–15 (DRH) and 39–40 (HS). His47 lines the a divalent metal cation pocket. 4-CDP-2-C-methyl-D-erythritol 2-phosphate is bound by residues 61-63 (DIG) and Phe141.

It belongs to the IspF family. Homotrimer. Requires a divalent metal cation as cofactor.

It catalyses the reaction 4-CDP-2-C-methyl-D-erythritol 2-phosphate = 2-C-methyl-D-erythritol 2,4-cyclic diphosphate + CMP. It functions in the pathway isoprenoid biosynthesis; isopentenyl diphosphate biosynthesis via DXP pathway; isopentenyl diphosphate from 1-deoxy-D-xylulose 5-phosphate: step 4/6. Involved in the biosynthesis of isopentenyl diphosphate (IPP) and dimethylallyl diphosphate (DMAPP), two major building blocks of isoprenoid compounds. Catalyzes the conversion of 4-diphosphocytidyl-2-C-methyl-D-erythritol 2-phosphate (CDP-ME2P) to 2-C-methyl-D-erythritol 2,4-cyclodiphosphate (ME-CPP) with a corresponding release of cytidine 5-monophosphate (CMP). This chain is 2-C-methyl-D-erythritol 2,4-cyclodiphosphate synthase, found in Thermotoga maritima (strain ATCC 43589 / DSM 3109 / JCM 10099 / NBRC 100826 / MSB8).